We begin with the raw amino-acid sequence, 224 residues long: uncharacterized protein (224 aa).

The region spanning 2–221 is the ABC transporter domain; sequence IEAKNVWKIY…KLRDGEIVEI (220 aa). 38-45 is a binding site for ATP; sequence GPSGCGKS.

The protein belongs to the ABC transporter superfamily.

This is an uncharacterized protein from Methanocaldococcus jannaschii (strain ATCC 43067 / DSM 2661 / JAL-1 / JCM 10045 / NBRC 100440) (Methanococcus jannaschii).